The sequence spans 1081 residues: Dyslexia-associated protein KIAA0319 homolog (1081 aa).

A signal peptide spans 1–22 (MVSPPGVLSSLLLLAAMAGGSS). The MANSC domain maps to 23-99 (QQCSEGRTYS…PRTTGPIRSY (77 aa)). The Extracellular portion of the chain corresponds to 23–964 (QQCSEGRTYS…WDGESNCEWS (942 aa)). Positions 168 to 331 (LQPSNQQDPR…VLTGLTPPPW (164 aa)) are disordered. The N-linked (GlcNAc...) asparagine glycan is linked to asparagine 196. Polar residues-rich tracts occupy residues 197–206 (ATATGDNSAA) and 222–234 (EQLQ…TWSP). Asparagine 228 is a glycosylation site (N-linked (GlcNAc...) asparagine). Over residues 236–255 (PGHSSISSVWPSSASPLPTE) the composition is skewed to low complexity. N-linked (GlcNAc...) asparagine glycans are attached at residues asparagine 272 and asparagine 302. Polar residues-rich tracts occupy residues 283–307 (HNPS…TVTP) and 314–324 (TPTFPTSTVLT). PKD domains are found at residues 345-436 (AVSA…VMPA), 444-533 (VAVV…IRDA), 539-629 (VANA…VQAE), 630-723 (NNQA…VKKE), and 729-820 (RAQA…VLPD). Asparagine 430, asparagine 507, asparagine 522, asparagine 545, and asparagine 560 each carry an N-linked (GlcNAc...) asparagine glycan. Residue asparagine 742 is glycosylated (N-linked (GlcNAc...) asparagine). A helical membrane pass occupies residues 965-985 (VFYVAALALTLTLLTGAVSWL). The Cytoplasmic portion of the chain corresponds to 986–1081 (CICCCRRRKR…VSFGYYSKDR (96 aa)). The Endocytosis signal motif lies at 1004-1007 (YTIL). A Phosphoserine modification is found at serine 1009.

As to quaternary structure, homodimer. Interacts with AP2M1; required for clathrin-mediated endocytosis. Post-translationally, N-glycosylated. O-glycosylated. In terms of processing, shedding of the extracellular domain and intramembrane cleavage produce several proteolytic products. The intramembrane cleavage releases a soluble cytoplasmic polypeptide that translocates to the nucleolus.

It is found in the cell membrane. Its subcellular location is the early endosome membrane. Functionally, involved in neuronal migration during development of the cerebral neocortex. May function in a cell autonomous and a non-cell autonomous manner and play a role in appropriate adhesion between migrating neurons and radial glial fibers. May also regulate growth and differentiation of dendrites. This Mus musculus (Mouse) protein is Dyslexia-associated protein KIAA0319 homolog (Kiaa0319).